A 548-amino-acid polypeptide reads, in one-letter code: Fumarate hydratase class I, anaerobic (548 aa).

Residue Cys105 participates in [4Fe-4S] cluster binding. Position 192 is an N6-acetyllysine (Lys192). [4Fe-4S] cluster-binding residues include Cys224 and Cys318.

This sequence belongs to the class-I fumarase family. Homodimer. It depends on [4Fe-4S] cluster as a cofactor.

The catalysed reaction is (S)-malate = fumarate + H2O. It carries out the reaction (S,S)-tartrate = oxaloacetate + H2O. Functionally, catalyzes the reversible hydration of fumarate to (S)-malate. Functions in the generation of fumarate for use as an anaerobic electron acceptor. To a lesser extent, also displays D-tartrate dehydratase activity, but is not able to convert (R)-malate, L-tartrate or meso-tartrate. Is required for anaerobic growth on D-tartrate. The polypeptide is Fumarate hydratase class I, anaerobic (Escherichia coli (strain K12)).